Here is a 137-residue protein sequence, read N- to C-terminus: Small ribosomal subunit protein uS19 (137 aa).

The protein belongs to the universal ribosomal protein uS19 family.

Functionally, protein S19 forms a complex with S13 that binds strongly to the 16S ribosomal RNA. The polypeptide is Small ribosomal subunit protein uS19 (Methanoculleus marisnigri (strain ATCC 35101 / DSM 1498 / JR1)).